We begin with the raw amino-acid sequence, 1462 residues long: DNA polymerase alpha catalytic subunit (1462 aa).

2 disordered regions span residues M1–E33 and D98–V123. Over residues R20 to K29 the composition is skewed to basic residues. Over residues A106–R116 the composition is skewed to basic and acidic residues. T174 bears the Phosphothreonine mark. S186, S190, and S209 each carry phosphoserine. Position 224 is an N6-acetyllysine (K224). The tract at residues D232–D251 is disordered. T406 carries the post-translational modification Phosphothreonine. Residues R650 to I715 are DNA-binding. Residue K970 is modified to N6-succinyllysine. Residues Q1245–K1376 form a DNA-binding region. Zn(2+) contacts are provided by C1283, C1286, C1310, C1315, C1348, C1353, C1371, and C1374. The CysA-type zinc finger occupies C1283 to S1318. The CysB motif signature appears at C1348–C1374.

Belongs to the DNA polymerase type-B family. Component of the alpha DNA polymerase complex (also known as the alpha DNA polymerase-primase complex) consisting of four subunits: the catalytic subunit POLA1, the regulatory subunit POLA2, and the primase complex subunits PRIM1 and PRIM2 respectively. Interacts with PARP1; this interaction functions as part of the control of replication fork progression. Interacts with MCM10 and WDHD1; these interactions recruit the polymerase alpha complex to the pre-replicative complex bound to DNA. Interacts with RPA1; this interaction stabilizes the replicative complex and reduces the misincorporation rate of DNA polymerase alpha by acting as a fidelity clamp. As to quaternary structure, (Microbial infection) Interacts with SV40 Large T antigen; this interaction allows viral DNA replication. In terms of assembly, (Microbial infection) Interacts with herpes simplex virus 1/HHV-1 replication origin-binding protein UL9. In terms of processing, a 165 kDa form is probably produced by proteolytic cleavage at Lys-124.

Its subcellular location is the nucleus. It localises to the cytoplasm. The protein localises to the cytosol. The enzyme catalyses DNA(n) + a 2'-deoxyribonucleoside 5'-triphosphate = DNA(n+1) + diphosphate. Autoinhibited in apo-primosome, where the zinc motif of POLA1 and oligonucleotide/olicosaccharide-binding domain of POLA2 are placed into the active site blocking RNA:DNA duplex entry. Its function is as follows. Catalytic subunit of the DNA polymerase alpha complex (also known as the alpha DNA polymerase-primase complex) which plays an essential role in the initiation of DNA synthesis. During the S phase of the cell cycle, the DNA polymerase alpha complex (composed of a catalytic subunit POLA1, a regulatory subunit POLA2 and two primase subunits PRIM1 and PRIM2) is recruited to DNA at the replicative forks via direct interactions with MCM10 and WDHD1. The primase subunit of the polymerase alpha complex initiates DNA synthesis by oligomerising short RNA primers on both leading and lagging strands. These primers are initially extended by the polymerase alpha catalytic subunit and subsequently transferred to polymerase delta and polymerase epsilon for processive synthesis on the lagging and leading strand, respectively. The reason this transfer occurs is because the polymerase alpha has limited processivity and lacks intrinsic 3' exonuclease activity for proofreading error, and therefore is not well suited for replicating long complexes. In the cytosol, responsible for a substantial proportion of the physiological concentration of cytosolic RNA:DNA hybrids, which are necessary to prevent spontaneous activation of type I interferon responses. The sequence is that of DNA polymerase alpha catalytic subunit (POLA1) from Homo sapiens (Human).